We begin with the raw amino-acid sequence, 147 residues long: Ribonuclease P protein component (147 aa).

A disordered region spans residues 117–147 (TRPRGQSSHRTRASREATSAHTTAVGEQPTQ).

Belongs to the RnpA family. In terms of assembly, consists of a catalytic RNA component (M1 or rnpB) and a protein subunit.

It carries out the reaction Endonucleolytic cleavage of RNA, removing 5'-extranucleotides from tRNA precursor.. Functionally, RNaseP catalyzes the removal of the 5'-leader sequence from pre-tRNA to produce the mature 5'-terminus. It can also cleave other RNA substrates such as 4.5S RNA. The protein component plays an auxiliary but essential role in vivo by binding to the 5'-leader sequence and broadening the substrate specificity of the ribozyme. The sequence is that of Ribonuclease P protein component from Thermobifida fusca (strain YX).